Consider the following 162-residue polypeptide: RNA pyrophosphohydrolase (162 aa).

The Nudix hydrolase domain occupies glutamate 7–glutamate 149. A Nudix box motif is present at residues glycine 40 to glycine 61.

Belongs to the Nudix hydrolase family. RppH subfamily. The cofactor is a divalent metal cation.

In terms of biological role, accelerates the degradation of transcripts by removing pyrophosphate from the 5'-end of triphosphorylated RNA, leading to a more labile monophosphorylated state that can stimulate subsequent ribonuclease cleavage. The chain is RNA pyrophosphohydrolase from Wolbachia pipientis subsp. Culex pipiens (strain wPip).